The sequence spans 482 residues: Dual specificity protein phosphatase 10 (482 aa).

Residues proline 168–aspartate 285 form the Rhodanese domain. The interaction with MAP kinases stretch occupies residues lysine 199–leucine 215. The Tyrosine-protein phosphatase domain occupies glutamate 321–asparagine 464. Catalysis depends on cysteine 408, which acts as the Phosphocysteine intermediate.

It belongs to the protein-tyrosine phosphatase family. Non-receptor class dual specificity subfamily. In terms of assembly, monomer. Interacts with MAPK14.

Its subcellular location is the cytoplasm. It is found in the nucleus. The enzyme catalyses O-phospho-L-tyrosyl-[protein] + H2O = L-tyrosyl-[protein] + phosphate. It catalyses the reaction O-phospho-L-seryl-[protein] + H2O = L-seryl-[protein] + phosphate. It carries out the reaction O-phospho-L-threonyl-[protein] + H2O = L-threonyl-[protein] + phosphate. Functionally, protein phosphatase involved in the inactivation of MAP kinases. Has a specificity for the MAPK11/MAPK12/MAPK13/MAPK14 subfamily. It preferably dephosphorylates p38. The polypeptide is Dual specificity protein phosphatase 10 (DUSP10) (Bos taurus (Bovine)).